A 120-amino-acid chain; its full sequence is Large ribosomal subunit protein uL18 (120 aa).

The protein belongs to the universal ribosomal protein uL18 family. In terms of assembly, part of the 50S ribosomal subunit; part of the 5S rRNA/L5/L18/L25 subcomplex. Contacts the 5S and 23S rRNAs.

Its function is as follows. This is one of the proteins that bind and probably mediate the attachment of the 5S RNA into the large ribosomal subunit, where it forms part of the central protuberance. The protein is Large ribosomal subunit protein uL18 of Brucella abortus (strain S19).